Reading from the N-terminus, the 734-residue chain is Photosystem I P700 chlorophyll a apoprotein A2 (734 aa).

Transmembrane regions (helical) follow at residues 46–69 (IFAS…FHVA), 135–158 (LYTG…LHLQ), 175–199 (LNHH…HVAI), 273–291 (IAHH…GHMY), 330–353 (IHFQ…QHMY), 369–395 (AALY…IFFI), 417–439 (AIIS…LYVH), and 517–535 (FLVH…LILV). C559 and C568 together coordinate [4Fe-4S] cluster. The next 2 membrane-spanning stretches (helical) occupy residues 575-596 (AFYL…YWHW) and 643-665 (LSVW…MFLI). Residues H654, M662, and Y670 each coordinate chlorophyll a. W671 contacts phylloquinone. Residues 707-727 (LVGLAHFSVGYIFTYAAFLIA) traverse the membrane as a helical segment.

Belongs to the PsaA/PsaB family. In terms of assembly, the PsaA/B heterodimer binds the P700 chlorophyll special pair and subsequent electron acceptors. PSI consists of a core antenna complex that captures photons, and an electron transfer chain that converts photonic excitation into a charge separation. The eukaryotic PSI reaction center is composed of at least 11 subunits. It depends on P700 is a chlorophyll a/chlorophyll a' dimer, A0 is one or more chlorophyll a, A1 is one or both phylloquinones and FX is a shared 4Fe-4S iron-sulfur center. as a cofactor.

The protein resides in the plastid. Its subcellular location is the chloroplast thylakoid membrane. The enzyme catalyses reduced [plastocyanin] + hnu + oxidized [2Fe-2S]-[ferredoxin] = oxidized [plastocyanin] + reduced [2Fe-2S]-[ferredoxin]. In terms of biological role, psaA and PsaB bind P700, the primary electron donor of photosystem I (PSI), as well as the electron acceptors A0, A1 and FX. PSI is a plastocyanin-ferredoxin oxidoreductase, converting photonic excitation into a charge separation, which transfers an electron from the donor P700 chlorophyll pair to the spectroscopically characterized acceptors A0, A1, FX, FA and FB in turn. Oxidized P700 is reduced on the lumenal side of the thylakoid membrane by plastocyanin. The sequence is that of Photosystem I P700 chlorophyll a apoprotein A2 from Gossypium hirsutum (Upland cotton).